Here is a 471-residue protein sequence, read N- to C-terminus: 5-hydroxytryptamine receptor 2A (471 aa).

Residues 1-80 (MEILCEDNIS…LQEKNWSALL (80 aa)) lie on the Extracellular side of the membrane. 5 N-linked (GlcNAc...) asparagine glycosylation sites follow: Asn8, Asn38, Asn44, Asn51, and Asn54. A helical transmembrane segment spans residues 81–97 (TTVVIILTIAGNILVIM). Residues 98-111 (AVSLEKKLQNATNY) lie on the Cytoplasmic side of the membrane. Residues 112–137 (FLMSLAIADMLLGFLVMPVSMLTILY) traverse the membrane as a helical segment. The Extracellular segment spans residues 138-146 (GYRWPLPSK). Residues 147-171 (LCAVWIYLDVLFSTASIMHLCAISL) traverse the membrane as a helical segment. Cys148 and Cys227 are disulfide-bonded. Position 155 (Asp155) interacts with serotonin. Positions 172–174 (DRY) match the DRY motif; important for ligand-induced conformation changes motif. Residues 172 to 191 (DRYVAIQNPIHHSRFNSRTK) lie on the Cytoplasmic side of the membrane. The helical transmembrane segment at 192–215 (AFLKIIAVWTISVGISMPIPVFGL) threads the bilayer. Over 216 to 232 (QDDSKVFKEGSCLLADD) the chain is Extracellular. The helical transmembrane segment at 233–258 (NFVLIGSFVAFFIPLTIMVITYFLTI) threads the bilayer. The Cytoplasmic portion of the chain corresponds to 259–322 (KSLQKEATLC…QSISNEQKAC (64 aa)). Phosphoserine is present on Ser280. A helical transmembrane segment spans residues 323 to 348 (KVLGIVFFLFVVMWCPFFITNIMAVI). Asn343 contacts serotonin. A disulfide bond links Cys349 and Cys353. At 349 to 356 (CKESCNEN) the chain is on the extracellular side. The chain crosses the membrane as a helical span at residues 357 to 382 (VIGALLNVFVWIGYLSSAVNPLVYTL). An NPxxY motif; important for ligand-induced conformation changes and signaling motif is present at residues 376–380 (NPLVY). The Cytoplasmic segment spans residues 383–471 (FNKTYRSAFS…ETVNEKVSCV (89 aa)). The PDZ-binding signature appears at 469-471 (SCV).

This sequence belongs to the G-protein coupled receptor 1 family. Interacts (via C-terminus) with MPDZ and PATJ. May interact (via C-terminus) with MPP3, PRDX6, DLG4, DLG1, CASK, APBA1 and MAGI2. Interacts with GRM2 and DRD2; this may affect signaling. Detected in neurons in brain cortex. Detected in adult intestine, especially in mucosal epithelium, longitudinal and circular layers of muscularis externa and myenteric plexuses. Highly expressed in Paneth cells, and detected at lower levels in enterocytes (at protein level). Detected in neurons in the brain cortex.

It localises to the cell membrane. The protein localises to the cell projection. The protein resides in the dendrite. It is found in the axon. Its subcellular location is the cytoplasmic vesicle. It localises to the membrane. The protein localises to the caveola. The protein resides in the presynapse. With respect to regulation, G-protein coupled receptor activity is regulated by lipids: oleamide increases HTR2A-mediated activity. Functionally, G-protein coupled receptor for 5-hydroxytryptamine (serotonin). Also functions as a receptor for various drugs and psychoactive substances, including mescaline, psilocybin, 1-(2,5-dimethoxy-4-iodophenyl)-2-aminopropane (DOI) and lysergic acid diethylamide (LSD). Ligand binding causes a conformation change that triggers signaling via guanine nucleotide-binding proteins (G proteins) and modulates the activity of downstream effectors. HTR2A is coupled to G(q)/G(11) G alpha proteins and activates phospholipase C-beta, releasing diacylglycerol (DAG) and inositol 1,4,5-trisphosphate (IP3) second messengers that modulate the activity of phosphatidylinositol 3-kinase and promote the release of Ca(2+) ions from intracellular stores, respectively. Beta-arrestin family members inhibit signaling via G proteins and mediate activation of alternative signaling pathways. Affects neural activity, perception, cognition and mood. Plays a role in the regulation of behavior, including responses to anxiogenic situations and psychoactive substances. Plays a role in intestinal smooth muscle contraction, and may play a role in arterial vasoconstriction. The protein is 5-hydroxytryptamine receptor 2A (Htr2a) of Mus musculus (Mouse).